Consider the following 117-residue polypeptide: Neurotoxic enhancer CSTX-13 (117 aa).

Positions 1-20 (MKVLVIFAVLSLVIFSNCSA) are cleaved as a signal peptide. Residues 21 to 47 (ETDEDFFGEESFEADDIIPFIAKEQVR) constitute a propeptide that is removed on maturation. 4 disulfide bridges follow: cysteine 50-cysteine 65, cysteine 57-cysteine 74, cysteine 64-cysteine 95, and cysteine 76-cysteine 93. The propeptide occupies 82–87 (RSETAR). A Threonine amide modification is found at threonine 116.

Belongs to the neurotoxin 19 (CSTX) family. 12 subfamily. Heterodimer of A and B chains; disulfide-linked. Interacts with CSTX-1 (AC P81694) (Kd=430 nM), and with CSTX-9 (AC P58604) (Kd=370 nM). In terms of tissue distribution, expressed by the venom gland.

The protein resides in the secreted. It localises to the target cell membrane. Its function is as follows. Synergistic toxin that induces or increases a cytolytic effect when combined with CSTX-1 (AC P81694) or CSTX-9 (AC P58604). When alone, has a weak insecticidal activity, with an unknown molecular target. The protein is Neurotoxic enhancer CSTX-13 of Cupiennius salei (American wandering spider).